The following is a 398-amino-acid chain: Arylacetamide deacetylase (398 aa).

Over 1–4 (GVKT) the chain is Cytoplasmic. A helical; Signal-anchor for type II membrane protein transmembrane segment spans residues 5–22 (VLLLIVGVLGAYYVYTPL). The Lumenal segment spans residues 23-398 (PDNIEEPWRL…QYFEWLRENV (376 aa)). Asn-77 carries N-linked (GlcNAc...) asparagine glycosylation. Residues 110–112 (HGG) carry the Involved in the stabilization of the negatively charged intermediate by the formation of the oxyanion hole motif. Residues Cys-115 and Cys-339 are joined by a disulfide bond. Ser-188 is an active-site residue. Asn-281 carries N-linked (GlcNAc...) asparagine glycosylation. Residues Asp-342 and His-372 contribute to the active site.

Belongs to the 'GDXG' lipolytic enzyme family. In terms of processing, glycosylated.

Its subcellular location is the endoplasmic reticulum membrane. It localises to the microsome membrane. It catalyses the reaction a triacylglycerol + H2O = a diacylglycerol + a fatty acid + H(+). Inhibited by diisopropylphosphofluoridate (DFP). Functionally, displays cellular triglyceride lipase activity in liver, increases the levels of intracellular fatty acids derived from the hydrolysis of newly formed triglyceride stores and plays a role in very low-density lipoprotein assembly. Displays serine esterase activity in liver. Deacetylates a variety of arylacetamide substrates, including xenobiotic compounds and procarcinogens, converting them to the primary arylamide compounds and increasing their toxicity. This chain is Arylacetamide deacetylase, found in Oryctolagus cuniculus (Rabbit).